The chain runs to 609 residues: UvrABC system protein C (609 aa).

Residues 13–91 (HEPGVYRMYD…IKLYQPRYNV (79 aa)) enclose the GIY-YIG domain. Positions 201 to 236 (QQVLDYLIGKMEQASRNLDFEQAARYRDQIQAVRSV) constitute a UVR domain.

This sequence belongs to the UvrC family. In terms of assembly, interacts with UvrB in an incision complex.

Its subcellular location is the cytoplasm. Functionally, the UvrABC repair system catalyzes the recognition and processing of DNA lesions. UvrC both incises the 5' and 3' sides of the lesion. The N-terminal half is responsible for the 3' incision and the C-terminal half is responsible for the 5' incision. The chain is UvrABC system protein C from Haemophilus influenzae (strain 86-028NP).